We begin with the raw amino-acid sequence, 188 residues long: Large ribosomal subunit protein uL10 (188 aa).

Belongs to the universal ribosomal protein uL10 family. Part of the ribosomal stalk of the 50S ribosomal subunit. The N-terminus interacts with L11 and the large rRNA to form the base of the stalk. The C-terminus forms an elongated spine to which L12 dimers bind in a sequential fashion forming a multimeric L10(L12)X complex.

Functionally, forms part of the ribosomal stalk, playing a central role in the interaction of the ribosome with GTP-bound translation factors. This chain is Large ribosomal subunit protein uL10, found in Crocosphaera subtropica (strain ATCC 51142 / BH68) (Cyanothece sp. (strain ATCC 51142)).